We begin with the raw amino-acid sequence, 384 residues long: PqqA peptide cyclase (384 aa).

A Radical SAM core domain is found at 14-226 (IPAPVGLLAE…IRIVEAARER (213 aa)). [4Fe-4S] cluster-binding residues include cysteine 28, cysteine 32, and cysteine 35.

Belongs to the radical SAM superfamily. PqqE family. As to quaternary structure, interacts with PqqD. The interaction is necessary for activity of PqqE. It depends on [4Fe-4S] cluster as a cofactor.

The enzyme catalyses [PQQ precursor protein] + S-adenosyl-L-methionine = E-Y cross-linked-[PQQ precursor protein] + 5'-deoxyadenosine + L-methionine + H(+). The protein operates within cofactor biosynthesis; pyrroloquinoline quinone biosynthesis. Its function is as follows. Catalyzes the cross-linking of a glutamate residue and a tyrosine residue in the PqqA protein as part of the biosynthesis of pyrroloquinoline quinone (PQQ). In Methylorubrum populi (strain ATCC BAA-705 / NCIMB 13946 / BJ001) (Methylobacterium populi), this protein is PqqA peptide cyclase.